A 211-amino-acid chain; its full sequence is Small ribosomal subunit protein uS3 (211 aa).

In terms of domain architecture, KH type-2 spans 38–106 (LRSFVKKTFH…DVELHIVEVK (69 aa)).

It belongs to the universal ribosomal protein uS3 family. As to quaternary structure, part of the 30S ribosomal subunit. Forms a tight complex with proteins S10 and S14.

In terms of biological role, binds the lower part of the 30S subunit head. Binds mRNA in the 70S ribosome, positioning it for translation. The chain is Small ribosomal subunit protein uS3 from Anaplasma marginale (strain Florida).